The sequence spans 992 residues: Translation initiation factor IF-2 (992 aa).

Disordered regions lie at residues 154–173 (RRLRDEQAAQEAAREREREA) and 338–399 (AAPG…RPES). The 170-residue stretch at 492 to 661 (PRAPVVTVMG…LLQAEVLELK (170 aa)) folds into the tr-type G domain. The segment at 501-508 (GHVDHGKT) is G1. 501-508 (GHVDHGKT) serves as a coordination point for GTP. The tract at residues 526–530 (GITQH) is G2. The segment at 547–550 (DTPG) is G3. GTP is bound by residues 547–551 (DTPGH) and 601–604 (NKID). A G4 region spans residues 601 to 604 (NKID). The tract at residues 637-639 (SAH) is G5.

Belongs to the TRAFAC class translation factor GTPase superfamily. Classic translation factor GTPase family. IF-2 subfamily.

Its subcellular location is the cytoplasm. In terms of biological role, one of the essential components for the initiation of protein synthesis. Protects formylmethionyl-tRNA from spontaneous hydrolysis and promotes its binding to the 30S ribosomal subunits. Also involved in the hydrolysis of GTP during the formation of the 70S ribosomal complex. The polypeptide is Translation initiation factor IF-2 (Polaromonas naphthalenivorans (strain CJ2)).